Consider the following 105-residue polypeptide: Small ribosomal subunit protein uS10 (105 aa).

Belongs to the universal ribosomal protein uS10 family. As to quaternary structure, part of the 30S ribosomal subunit.

Functionally, involved in the binding of tRNA to the ribosomes. In Synechococcus sp. (strain JA-2-3B'a(2-13)) (Cyanobacteria bacterium Yellowstone B-Prime), this protein is Small ribosomal subunit protein uS10.